Reading from the N-terminus, the 410-residue chain is Multifunctional CCA protein (410 aa).

ATP-binding residues include Gly-8 and Arg-11. CTP-binding residues include Gly-8 and Arg-11. Mg(2+)-binding residues include Asp-21 and Asp-23. ATP is bound by residues Arg-91, Arg-137, and Arg-140. Arg-91, Arg-137, and Arg-140 together coordinate CTP. The HD domain occupies 228 to 329 (TGVHVLSVLQ…LELLQSFDVY (102 aa)).

This sequence belongs to the tRNA nucleotidyltransferase/poly(A) polymerase family. Bacterial CCA-adding enzyme type 1 subfamily. As to quaternary structure, monomer. Can also form homodimers and oligomers. Mg(2+) is required as a cofactor. It depends on Ni(2+) as a cofactor.

It carries out the reaction a tRNA precursor + 2 CTP + ATP = a tRNA with a 3' CCA end + 3 diphosphate. The enzyme catalyses a tRNA with a 3' CCA end + 2 CTP + ATP = a tRNA with a 3' CCACCA end + 3 diphosphate. In terms of biological role, catalyzes the addition and repair of the essential 3'-terminal CCA sequence in tRNAs without using a nucleic acid template. Adds these three nucleotides in the order of C, C, and A to the tRNA nucleotide-73, using CTP and ATP as substrates and producing inorganic pyrophosphate. tRNA 3'-terminal CCA addition is required both for tRNA processing and repair. Also involved in tRNA surveillance by mediating tandem CCA addition to generate a CCACCA at the 3' terminus of unstable tRNAs. While stable tRNAs receive only 3'-terminal CCA, unstable tRNAs are marked with CCACCA and rapidly degraded. The polypeptide is Multifunctional CCA protein (Pseudomonas aeruginosa (strain LESB58)).